The primary structure comprises 300 residues: Ribosomal RNA small subunit methyltransferase H (300 aa).

S-adenosyl-L-methionine-binding positions include 46-48, aspartate 65, phenylalanine 92, aspartate 107, and glutamine 114; that span reads GGH.

The protein belongs to the methyltransferase superfamily. RsmH family.

The protein resides in the cytoplasm. It catalyses the reaction cytidine(1402) in 16S rRNA + S-adenosyl-L-methionine = N(4)-methylcytidine(1402) in 16S rRNA + S-adenosyl-L-homocysteine + H(+). Specifically methylates the N4 position of cytidine in position 1402 (C1402) of 16S rRNA. The protein is Ribosomal RNA small subunit methyltransferase H of Prochlorococcus marinus subsp. pastoris (strain CCMP1986 / NIES-2087 / MED4).